A 314-amino-acid chain; its full sequence is Putative 4-hydroxy-2-oxoglutarate aldolase, mitochondrial (314 aa).

50–51 (TN) is a substrate binding site. The active-site Schiff-base intermediate with substrate is K171.

This sequence belongs to the DapA family.

It catalyses the reaction (4S)-4-hydroxy-2-oxoglutarate = glyoxylate + pyruvate. It carries out the reaction (4R)-4-hydroxy-2-oxoglutarate = glyoxylate + pyruvate. May catalyze the final step in the metabolic pathway of hydroxyproline. The sequence is that of Putative 4-hydroxy-2-oxoglutarate aldolase, mitochondrial from Coccidioides immitis (strain RS) (Valley fever fungus).